Reading from the N-terminus, the 297-residue chain is Heme A synthase (297 aa).

The Cytoplasmic segment spans residues 1–6 (MNRKLS). The helical transmembrane segment at 7–27 (IFSAFVTFTMMIVLLMGGTVT) threads the bilayer. Residues 28 to 62 (KTDSGNGCGTDWPLCHGELIPTNPSVETMIEYSHR) lie on the Extracellular side of the membrane. A disulfide bridge connects residues Cys35 and Cys42. Residue Glu58 is part of the active site. Residue His61 participates in heme o binding. The chain crosses the membrane as a helical span at residues 63–83 (AVTGVVGLLIIALCLWTLVAF). Residues 84–90 (KDRLDIK) are Cytoplasmic-facing. A helical transmembrane segment spans residues 91–111 (IFAFLAFIFMLIQSIVGAGAV). Topologically, residues 112 to 121 (VWQQSDLVMA) are extracellular. The chain crosses the membrane as a helical span at residues 122–142 (LHFGISLISFASLLILTILIM). His123 provides a ligand contact to heme o. At 143-160 (ERSGQEFRESVPAFLRKL) the chain is on the cytoplasmic side. The helical transmembrane segment at 161-181 (LYGLLIYTLIVVYTGAFVRHV) threads the bilayer. The Extracellular segment spans residues 182-201 (GATYACVGWPVCSQPTMTFE). Residues Cys187 and Cys193 are joined by a disulfide bond. A helical membrane pass occupies residues 202 to 222 (AWVQMIHRILAGLLFFYTLFV). His208 contacts heme b. Residues 223–236 (HYTAIRLKHRTSRT) are Cytoplasmic-facing. A helical transmembrane segment spans residues 237 to 257 (GMLFATFFISCQVATGAWIVL). Over 258–262 (GGHAT) the chain is Extracellular. A helical transmembrane segment spans residues 263–283 (YVPLLHAFLITCYFGVISYLA). A heme b-binding site is contributed by His268. Over 284–297 (YHAFRTRKKDSRLR) the chain is Cytoplasmic.

This sequence belongs to the COX15/CtaA family. Type 1 subfamily. As to quaternary structure, interacts with CtaB. It depends on heme b as a cofactor.

Its subcellular location is the cell membrane. The enzyme catalyses Fe(II)-heme o + 2 A + H2O = Fe(II)-heme a + 2 AH2. Its pathway is porphyrin-containing compound metabolism; heme A biosynthesis; heme A from heme O: step 1/1. In terms of biological role, catalyzes the conversion of heme O to heme A by two successive hydroxylations of the methyl group at C8. The first hydroxylation forms heme I, the second hydroxylation results in an unstable dihydroxymethyl group, which spontaneously dehydrates, resulting in the formyl group of heme A. The chain is Heme A synthase from Exiguobacterium sibiricum (strain DSM 17290 / CCUG 55495 / CIP 109462 / JCM 13490 / 255-15).